A 440-amino-acid polypeptide reads, in one-letter code: Zinc finger MYND domain-containing protein 10 (440 aa).

The segment at 366-440 (QDLRLQARRW…VLAAQGDRAK (75 aa)) is interaction with DNAAF11. Residues Cys394, Cys397, Cys405, Cys408, Cys414, Cys418, His426, and Cys430 each contribute to the Zn(2+) site. The MYND-type zinc-finger motif lies at 394–430 (CAYCSAEASKRCSRCQNEWYCCRECQVKHWEKHGKTC).

Belongs to the ZMYND10 family. Interacts (via C-terminus) with DNAAF11 (via CS domain); this interaction stabilizes DNAAF11 at the protein level. Interacts (via C-terminus) with DNAL1; this interaction stabilizes DNAL1 at the protein level. Interacts with DNAAF4, HSPA8, IQUB, RUVBL2 and DYNTL5.

Its subcellular location is the cytoplasm. It is found in the cytoskeleton. It localises to the microtubule organizing center. The protein localises to the centrosome. The protein resides in the centriolar satellite. Its subcellular location is the apical cell membrane. It is found in the dynein axonemal particle. Plays a role in axonemal structure organization and motility. Involved in axonemal pre-assembly of inner and outer dynein arms (IDA and ODA, respectively) for proper axoneme building for cilia motility. May act by indirectly regulating transcription of dynein proteins. The polypeptide is Zinc finger MYND domain-containing protein 10 (Homo sapiens (Human)).